We begin with the raw amino-acid sequence, 197 residues long: Dephospho-CoA kinase (197 aa).

The DPCK domain maps to 2–197 (IIGITGGIAS…SALLSLANPR (196 aa)). 10 to 15 (ASGKST) contacts ATP.

It belongs to the CoaE family.

The protein localises to the cytoplasm. The catalysed reaction is 3'-dephospho-CoA + ATP = ADP + CoA + H(+). It functions in the pathway cofactor biosynthesis; coenzyme A biosynthesis; CoA from (R)-pantothenate: step 5/5. Catalyzes the phosphorylation of the 3'-hydroxyl group of dephosphocoenzyme A to form coenzyme A. The chain is Dephospho-CoA kinase from Streptococcus pyogenes serotype M28 (strain MGAS6180).